The following is a 380-amino-acid chain: Probable inactive dehydrogenase easA (380 aa).

FMN-binding positions include 25–27 (PMT), A60, Q102, and H171. Substrate contacts are provided by H171 and N174. FMN contacts are provided by residues K223, G299, 324–325 (GR), and R325. Residue Y352 participates in substrate binding.

This sequence belongs to the NADH:flavin oxidoreductase/NADH oxidase family.

In terms of biological role, probable inactive dehydrogenase; part of the gene cluster that mediates the biosynthesis of fungal ergot alkaloid. DmaW catalyzes the first step of ergot alkaloid biosynthesis by condensing dimethylallyl diphosphate (DMAP) and tryptophan to form 4-dimethylallyl-L-tryptophan. The second step is catalyzed by the methyltransferase easF that methylates 4-dimethylallyl-L-tryptophan in the presence of S-adenosyl-L-methionine, resulting in the formation of 4-dimethylallyl-L-abrine. The catalase easC and the FAD-dependent oxidoreductase easE then transform 4-dimethylallyl-L-abrine to chanoclavine-I which is further oxidized by easD in the presence of NAD(+), resulting in the formation of chanoclavine-I aldehyde. Agroclavine dehydrogenase easG then mediates the conversion of chanoclavine-I aldehyde to agroclavine via a non-enzymatic adduct reaction: the substrate is an iminium intermediate that is formed spontaneously from chanoclavine-I aldehyde in the presence of glutathione. The presence of easA is not required to complete this reaction. Further conversion of agroclavine to paspalic acid is a two-step process involving oxidation of agroclavine to elymoclavine and of elymoclavine to paspalic acid, the second step being performed by the elymoclavine oxidase cloA. Paspalic acid is then further converted to D-lysergic acid. Ergopeptines are assembled from D-lysergic acid and three different amino acids by the D-lysergyl-peptide-synthetases composed each of a monomudular and a trimodular nonribosomal peptide synthetase subunit. LpsB and lpsC encode the monomodular subunits responsible for D-lysergic acid activation and incorporation into the ergopeptine backbone. LpsA1 and A2 subunits encode the trimodular nonribosomal peptide synthetase assembling the tripeptide portion of ergopeptines. LpsA1 is responsible for formation of the major ergopeptine, ergotamine, and lpsA2 for alpha-ergocryptine, the minor ergopeptine of the total alkaloid mixture elaborated by C.purpurea. D-lysergyl-tripeptides are assembled by the nonribosomal peptide synthetases and released as N-(D-lysergyl-aminoacyl)-lactams. Cyclolization of the D-lysergyl-tripeptides is performed by the Fe(2+)/2-ketoglutarate-dependent dioxygenase easH which introduces a hydroxyl group into N-(D-lysergyl-aminoacyl)-lactam at alpha-C of the aminoacyl residue followed by spontaneous condensation with the terminal lactam carbonyl group. This Claviceps purpurea (strain 20.1) (Ergot fungus) protein is Probable inactive dehydrogenase easA.